The chain runs to 613 residues: Dihydroxy-acid dehydratase (613 aa).

Mg(2+) is bound at residue aspartate 81. Residue cysteine 122 participates in [2Fe-2S] cluster binding. Mg(2+) is bound by residues aspartate 123 and lysine 124. Lysine 124 is modified (N6-carboxylysine). Cysteine 197 serves as a coordination point for [2Fe-2S] cluster. Residue glutamate 493 coordinates Mg(2+). Serine 519 acts as the Proton acceptor in catalysis.

Belongs to the IlvD/Edd family. In terms of assembly, homodimer. Requires [2Fe-2S] cluster as cofactor. Mg(2+) is required as a cofactor.

The enzyme catalyses (2R)-2,3-dihydroxy-3-methylbutanoate = 3-methyl-2-oxobutanoate + H2O. The catalysed reaction is (2R,3R)-2,3-dihydroxy-3-methylpentanoate = (S)-3-methyl-2-oxopentanoate + H2O. Its pathway is amino-acid biosynthesis; L-isoleucine biosynthesis; L-isoleucine from 2-oxobutanoate: step 3/4. It participates in amino-acid biosynthesis; L-valine biosynthesis; L-valine from pyruvate: step 3/4. In terms of biological role, functions in the biosynthesis of branched-chain amino acids. Catalyzes the dehydration of (2R,3R)-2,3-dihydroxy-3-methylpentanoate (2,3-dihydroxy-3-methylvalerate) into 2-oxo-3-methylpentanoate (2-oxo-3-methylvalerate) and of (2R)-2,3-dihydroxy-3-methylbutanoate (2,3-dihydroxyisovalerate) into 2-oxo-3-methylbutanoate (2-oxoisovalerate), the penultimate precursor to L-isoleucine and L-valine, respectively. The protein is Dihydroxy-acid dehydratase of Corynebacterium glutamicum (strain R).